A 389-amino-acid polypeptide reads, in one-letter code: Large ribosomal subunit protein uL3 (389 aa).

It belongs to the universal ribosomal protein uL3 family.

The protein resides in the cytoplasm. This is Large ribosomal subunit protein uL3 (RPL3) from Debaryomyces hansenii (strain ATCC 36239 / CBS 767 / BCRC 21394 / JCM 1990 / NBRC 0083 / IGC 2968) (Yeast).